The sequence spans 841 residues: Translation initiation factor IF-2 (841 aa).

The interval 87–254 is disordered; sequence RKKKVFVQRS…KRNAHGFQSP (168 aa). Basic and acidic residues predominate over residues 96–135; it reads SPEEIEAERKREMDERRAVENAARQKAEEEAKRRAEEDAR. Over residues 136–175 the composition is skewed to low complexity; the sequence is SQPAASQSAPAAAEPVAAAEPVREAAPAAAPAPASAAPSA. Basic and acidic residues-rich tracts occupy residues 176–217 and 225–234; these read DARK…EKAP and TTDEESDSFR. Residues 235–248 are compositionally biased toward basic residues; it reads RGGRGKGKLKKRNA. A tr-type G domain is found at 341–510; sequence SRAPVVTVMG…LLQAEVLELK (170 aa). A G1 region spans residues 350–357; it reads GHVDHGKT. A GTP-binding site is contributed by 350-357; the sequence is GHVDHGKT. Residues 375 to 379 are G2; sequence GITQH. Residues 396 to 399 are G3; it reads DTPG. Residues 396–400 and 450–453 each bind GTP; these read DTPGH and NKID. Positions 450-453 are G4; the sequence is NKID. A G5 region spans residues 486-488; sequence SAK.

This sequence belongs to the TRAFAC class translation factor GTPase superfamily. Classic translation factor GTPase family. IF-2 subfamily.

It localises to the cytoplasm. In terms of biological role, one of the essential components for the initiation of protein synthesis. Protects formylmethionyl-tRNA from spontaneous hydrolysis and promotes its binding to the 30S ribosomal subunits. Also involved in the hydrolysis of GTP during the formation of the 70S ribosomal complex. This is Translation initiation factor IF-2 from Pseudomonas syringae pv. syringae (strain B728a).